Reading from the N-terminus, the 254-residue chain is rRNA N-glycosylase sapovaccarin-S1 (254 aa).

The protein belongs to the ribosome-inactivating protein family. Type 1 RIP subfamily. As to expression, expressed in seeds; most abundant in the perisperm.

The catalysed reaction is Endohydrolysis of the N-glycosidic bond at one specific adenosine on the 28S rRNA.. Exhibits N-glycosylase activity. Catalyzes the release of one adenine from a ribosome. Acts as a ribosome-inactivating protein and inhibits protein synthesis in a rabbit-reticulocyte lysate system and in various cell lines (in vitro). Induces cell death in Huh-7 liver cells. May contribute to the protection against plant pests and predators or play a role in regulating the death of plant cells. The chain is rRNA N-glycosylase sapovaccarin-S1 from Gypsophila vaccaria (Cow soapwort).